A 397-amino-acid polypeptide reads, in one-letter code: t-SNARE affecting a late Golgi compartment protein 2 (397 aa).

The Cytoplasmic portion of the chain corresponds to 1 to 317; that stretch reads MFRDRTNLFL…HYQKRTQKCK (317 aa). A coiled-coil region spans residues 74–96; that stretch reads DIAQDVDDYLLEVRRLSEQLAKV. Ser109 carries the post-translational modification Phosphoserine. One can recognise a t-SNARE coiled-coil homology domain in the interval 244–306; that stretch reads EAYLRERDEE…KSADKELNKA (63 aa). Residues 318 to 338 form a helical; Anchor for type IV membrane protein membrane-spanning segment; sequence VILLLTLCVIALFFFVMLKPH. The Vesicular portion of the chain corresponds to 339–397; sequence GGGSGGRNNGSNKYNNDDNKTVNNSHDDGSNTHINDEESNLPSIVEVTESENDALDDLL. The disordered stretch occupies residues 341–397; sequence GSGGRNNGSNKYNNDDNKTVNNSHDDGSNTHINDEESNLPSIVEVTESENDALDDLL. A compositionally biased stretch (basic and acidic residues) spans 353-374; that stretch reads NNDDNKTVNNSHDDGSNTHIND. Residues 386 to 397 show a composition bias toward acidic residues; the sequence is TESENDALDDLL.

Belongs to the syntaxin family. In terms of assembly, interacts with VPS45.

Its subcellular location is the golgi apparatus. It is found in the trans-Golgi network membrane. The protein localises to the endosome membrane. Its function is as follows. t-SNARE that functions in transport from the endosome to the late Golgi and on the endocytic pathway. This Saccharomyces cerevisiae (strain ATCC 204508 / S288c) (Baker's yeast) protein is t-SNARE affecting a late Golgi compartment protein 2 (TLG2).